Here is a 153-residue protein sequence, read N- to C-terminus: Regulatory protein RecX (153 aa).

This sequence belongs to the RecX family.

It localises to the cytoplasm. Functionally, modulates RecA activity. This is Regulatory protein RecX from Vibrio vulnificus (strain CMCP6).